A 388-amino-acid polypeptide reads, in one-letter code: Dual-specificity RNA methyltransferase RlmN (388 aa).

Catalysis depends on E109, which acts as the Proton acceptor. A Radical SAM core domain is found at 115 to 354; it reads EEDRATLCVS…TIVRKTRGDD (240 aa). C122 and C359 are joined by a disulfide. Residues C129, C133, and C136 each coordinate [4Fe-4S] cluster. Residues 183-184, S215, 237-239, and N316 contribute to the S-adenosyl-L-methionine site; these read GE and SLH. C359 serves as the catalytic S-methylcysteine intermediate.

The protein belongs to the radical SAM superfamily. RlmN family. [4Fe-4S] cluster is required as a cofactor.

The protein localises to the cytoplasm. The enzyme catalyses adenosine(2503) in 23S rRNA + 2 reduced [2Fe-2S]-[ferredoxin] + 2 S-adenosyl-L-methionine = 2-methyladenosine(2503) in 23S rRNA + 5'-deoxyadenosine + L-methionine + 2 oxidized [2Fe-2S]-[ferredoxin] + S-adenosyl-L-homocysteine. The catalysed reaction is adenosine(37) in tRNA + 2 reduced [2Fe-2S]-[ferredoxin] + 2 S-adenosyl-L-methionine = 2-methyladenosine(37) in tRNA + 5'-deoxyadenosine + L-methionine + 2 oxidized [2Fe-2S]-[ferredoxin] + S-adenosyl-L-homocysteine. Its function is as follows. Specifically methylates position 2 of adenine 2503 in 23S rRNA and position 2 of adenine 37 in tRNAs. m2A2503 modification seems to play a crucial role in the proofreading step occurring at the peptidyl transferase center and thus would serve to optimize ribosomal fidelity. In Klebsiella pneumoniae (strain 342), this protein is Dual-specificity RNA methyltransferase RlmN.